Here is a 438-residue protein sequence, read N- to C-terminus: 3-phosphoshikimate 1-carboxyvinyltransferase (438 aa).

3-phosphoshikimate contacts are provided by lysine 26, serine 27, and arginine 31. Phosphoenolpyruvate is bound at residue lysine 26. Phosphoenolpyruvate-binding residues include glycine 99 and arginine 127. Residues serine 170, serine 171, glutamine 172, serine 199, glutamate 314, and histidine 343 each coordinate 3-phosphoshikimate. Residue glutamine 172 coordinates phosphoenolpyruvate. Residue glutamate 314 is the Proton acceptor of the active site. The phosphoenolpyruvate site is built by arginine 347, arginine 388, and lysine 413.

It belongs to the EPSP synthase family. In terms of assembly, monomer.

The protein resides in the cytoplasm. The catalysed reaction is 3-phosphoshikimate + phosphoenolpyruvate = 5-O-(1-carboxyvinyl)-3-phosphoshikimate + phosphate. The protein operates within metabolic intermediate biosynthesis; chorismate biosynthesis; chorismate from D-erythrose 4-phosphate and phosphoenolpyruvate: step 6/7. Catalyzes the transfer of the enolpyruvyl moiety of phosphoenolpyruvate (PEP) to the 5-hydroxyl of shikimate-3-phosphate (S3P) to produce enolpyruvyl shikimate-3-phosphate and inorganic phosphate. The polypeptide is 3-phosphoshikimate 1-carboxyvinyltransferase (Mycobacterium sp. (strain MCS)).